The chain runs to 84 residues: Acyl carrier protein homolog (84 aa).

A Carrier domain is found at 4 to 79; it reads HEILLKIKEI…DLVLEVKNLL (76 aa). S39 carries the O-(pantetheine 4'-phosphoryl)serine modification.

Post-translationally, 4'-phosphopantetheine is transferred from CoA to a specific serine of the apo-ACP-like protein.

It participates in lipid metabolism; fatty acid biosynthesis. Carrier of the growing fatty acid chain in fatty acid biosynthesis. The sequence is that of Acyl carrier protein homolog from Mycoplasma genitalium (strain ATCC 33530 / DSM 19775 / NCTC 10195 / G37) (Mycoplasmoides genitalium).